The following is a 487-amino-acid chain: Glutamyl-tRNA(Gln) amidotransferase subunit A (487 aa).

Catalysis depends on charge relay system residues lysine 79 and serine 158. Catalysis depends on serine 182, which acts as the Acyl-ester intermediate.

Belongs to the amidase family. GatA subfamily. In terms of assembly, heterotrimer of A, B and C subunits.

The enzyme catalyses L-glutamyl-tRNA(Gln) + L-glutamine + ATP + H2O = L-glutaminyl-tRNA(Gln) + L-glutamate + ADP + phosphate + H(+). Functionally, allows the formation of correctly charged Gln-tRNA(Gln) through the transamidation of misacylated Glu-tRNA(Gln) in organisms which lack glutaminyl-tRNA synthetase. The reaction takes place in the presence of glutamine and ATP through an activated gamma-phospho-Glu-tRNA(Gln). The sequence is that of Glutamyl-tRNA(Gln) amidotransferase subunit A from Ehrlichia ruminantium (strain Gardel).